The primary structure comprises 57 residues: Small ribosomal subunit protein bS21 (57 aa).

Residues 32 to 42 (VRRREHYEKPS) are compositionally biased toward basic and acidic residues. Positions 32–57 (VRRREHYEKPSQRRKRKLEASRRRRR) are disordered. The span at 43-57 (QRRKRKLEASRRRRR) shows a compositional bias: basic residues.

This sequence belongs to the bacterial ribosomal protein bS21 family.

This Synechococcus elongatus (strain ATCC 33912 / PCC 7942 / FACHB-805) (Anacystis nidulans R2) protein is Small ribosomal subunit protein bS21.